Consider the following 1774-residue polypeptide: U3 small nucleolar RNA-associated protein 10 (1774 aa).

Residues 1209–1228 form a disordered region; sequence TEQGKSDGDESGSEPDNDNP. One copy of the HEAT repeat lies at 1734–1772; the sequence is LVPVIAELLEDDDEEVEQEVRTGLVKVVETVLGEPFDRY.

The protein belongs to the HEATR1/UTP10 family. In terms of assembly, component of the ribosomal small subunit (SSU) processome.

The protein resides in the nucleus. It is found in the nucleolus. Functionally, involved in nucleolar processing of pre-18S ribosomal RNA. Involved in ribosome biosynthesis. In Eremothecium gossypii (strain ATCC 10895 / CBS 109.51 / FGSC 9923 / NRRL Y-1056) (Yeast), this protein is U3 small nucleolar RNA-associated protein 10.